The sequence spans 162 residues: Dihydrofolate reductase type 3 (162 aa).

Residues 2–160 form the DHFR domain; that stretch reads LISLIAALAH…YACEFVTLSR (159 aa).

It belongs to the dihydrofolate reductase family. In terms of assembly, monomer.

It carries out the reaction (6S)-5,6,7,8-tetrahydrofolate + NADP(+) = 7,8-dihydrofolate + NADPH + H(+). The protein operates within cofactor biosynthesis; tetrahydrofolate biosynthesis; 5,6,7,8-tetrahydrofolate from 7,8-dihydrofolate: step 1/1. Functionally, key enzyme in folate metabolism. Catalyzes an essential reaction for de novo glycine and purine synthesis, and for DNA precursor synthesis. This is Dihydrofolate reductase type 3 (dhfrIII) from Salmonella typhimurium.